A 179-amino-acid polypeptide reads, in one-letter code: uncharacterized protein (179 aa).

Residues 5-25 traverse the membrane as a helical segment; the sequence is MLAGIGIGVAAALGVAAVASL.

To Rickettsia 17 kDa surface antigen.

Its subcellular location is the membrane. This is an uncharacterized protein from Escherichia coli O6:H1 (strain CFT073 / ATCC 700928 / UPEC).